The following is a 349-amino-acid chain: Probable arabinogalactan endo-beta-1,4-galactanase A (349 aa).

The first 15 residues, 1–15 (MLLSFLPLLPLATAA), serve as a signal peptide directing secretion. Residue Asn126 is glycosylated (N-linked (GlcNAc...) asparagine). Glu150 serves as the catalytic Proton donor. Glu261 acts as the Nucleophile in catalysis.

The protein belongs to the glycosyl hydrolase 53 family.

Its subcellular location is the secreted. It carries out the reaction The enzyme specifically hydrolyzes (1-&gt;4)-beta-D-galactosidic linkages in type I arabinogalactans.. In terms of biological role, endogalactanase involved in the degradation of plant cell wall polysaccharides, and more particularly of hairy regions of pectin. This is Probable arabinogalactan endo-beta-1,4-galactanase A (galA) from Aspergillus terreus (strain NIH 2624 / FGSC A1156).